Reading from the N-terminus, the 708-residue chain is Polyribonucleotide nucleotidyltransferase (708 aa).

Asp488 and Asp494 together coordinate Mg(2+). The KH domain occupies 555–615 (PIIKVTKVDP…ENVDKAIELI (61 aa)). In terms of domain architecture, S1 motif spans 625 to 692 (GEVLEGKVTR…DLGRLQFKRV (68 aa)).

This sequence belongs to the polyribonucleotide nucleotidyltransferase family. It depends on Mg(2+) as a cofactor.

It is found in the cytoplasm. It catalyses the reaction RNA(n+1) + phosphate = RNA(n) + a ribonucleoside 5'-diphosphate. Functionally, involved in mRNA degradation. Catalyzes the phosphorolysis of single-stranded polyribonucleotides processively in the 3'- to 5'-direction. This chain is Polyribonucleotide nucleotidyltransferase, found in Thermotoga petrophila (strain ATCC BAA-488 / DSM 13995 / JCM 10881 / RKU-1).